Consider the following 562-residue polypeptide: Dihydroxy-acid dehydratase (562 aa).

Asp80 lines the Mg(2+) pocket. Residue Cys121 coordinates [2Fe-2S] cluster. 2 residues coordinate Mg(2+): Asp122 and Lys123. Lys123 bears the N6-carboxylysine mark. Residue Cys194 participates in [2Fe-2S] cluster binding. Glu446 contributes to the Mg(2+) binding site. The active-site Proton acceptor is Ser472.

The protein belongs to the IlvD/Edd family. As to quaternary structure, homodimer. It depends on [2Fe-2S] cluster as a cofactor. Requires Mg(2+) as cofactor.

It catalyses the reaction (2R)-2,3-dihydroxy-3-methylbutanoate = 3-methyl-2-oxobutanoate + H2O. The enzyme catalyses (2R,3R)-2,3-dihydroxy-3-methylpentanoate = (S)-3-methyl-2-oxopentanoate + H2O. It functions in the pathway amino-acid biosynthesis; L-isoleucine biosynthesis; L-isoleucine from 2-oxobutanoate: step 3/4. Its pathway is amino-acid biosynthesis; L-valine biosynthesis; L-valine from pyruvate: step 3/4. Functions in the biosynthesis of branched-chain amino acids. Catalyzes the dehydration of (2R,3R)-2,3-dihydroxy-3-methylpentanoate (2,3-dihydroxy-3-methylvalerate) into 2-oxo-3-methylpentanoate (2-oxo-3-methylvalerate) and of (2R)-2,3-dihydroxy-3-methylbutanoate (2,3-dihydroxyisovalerate) into 2-oxo-3-methylbutanoate (2-oxoisovalerate), the penultimate precursor to L-isoleucine and L-valine, respectively. This is Dihydroxy-acid dehydratase from Staphylococcus aureus (strain USA300 / TCH1516).